A 244-amino-acid chain; its full sequence is ATP synthase subunit a (244 aa).

7 helical membrane-spanning segments follow: residues Leu-17–Thr-37, Pro-74–Leu-94, Asp-112–Val-132, Ile-148–Leu-168, Tyr-171–Phe-191, Ile-196–Phe-216, and Ser-217–Ser-237.

Belongs to the ATPase A chain family. As to quaternary structure, F-type ATPases have 2 components, CF(1) - the catalytic core - and CF(0) - the membrane proton channel. CF(1) has five subunits: alpha(3), beta(3), gamma(1), delta(1), epsilon(1). CF(0) has three main subunits: a(1), b(2) and c(9-12). The alpha and beta chains form an alternating ring which encloses part of the gamma chain. CF(1) is attached to CF(0) by a central stalk formed by the gamma and epsilon chains, while a peripheral stalk is formed by the delta and b chains.

The protein resides in the cell membrane. Functionally, key component of the proton channel; it plays a direct role in the translocation of protons across the membrane. The sequence is that of ATP synthase subunit a from Bacillus pumilus (strain SAFR-032).